A 535-amino-acid chain; its full sequence is 3-hydroxyindolin-2-one monooxygenase (535 aa).

Helical transmembrane passes span 14–34 (VVQC…LLAI) and 469–489 (ICAG…NLIY). Heme is bound at residue Cys470.

The protein belongs to the cytochrome P450 family. Requires heme as cofactor.

It is found in the membrane. It catalyses the reaction 3-hydroxyindolin-2-one + reduced [NADPH--hemoprotein reductase] + O2 = 2-hydroxy-2H-1,4-benzoxazin-3(4H)-one + oxidized [NADPH--hemoprotein reductase] + H2O + H(+). It participates in secondary metabolite biosynthesis; 2,4-dihydroxy-1,4-benzoxazin-3-one biosynthesis; 2,4-dihydroxy-1,4-benzoxazin-3-one from indoleglycerol phosphate: step 4/5. Catalyzes the conversion of 3-hydroxyindolin-2-one to 2-hydroxy-1,4-benzoxazin-3-one (HBOA). The protein is 3-hydroxyindolin-2-one monooxygenase (CYP71C1) of Zea mays (Maize).